Here is a 252-residue protein sequence, read N- to C-terminus: Phosphoglycolate phosphatase (252 aa).

Asp13 serves as the catalytic Nucleophile. Residues Asp13, Asp15, and Asp192 each contribute to the Mg(2+) site.

The protein belongs to the HAD-like hydrolase superfamily. CbbY/CbbZ/Gph/YieH family. Monomer. Mg(2+) serves as cofactor. Requires chloride as cofactor.

It carries out the reaction 2-phosphoglycolate + H2O = glycolate + phosphate. The protein operates within organic acid metabolism; glycolate biosynthesis; glycolate from 2-phosphoglycolate: step 1/1. Functionally, specifically catalyzes the dephosphorylation of 2-phosphoglycolate. Is involved in the dissimilation of the intracellular 2-phosphoglycolate formed during the DNA repair of 3'-phosphoglycolate ends, a major class of DNA lesions induced by oxidative stress. In Salmonella choleraesuis (strain SC-B67), this protein is Phosphoglycolate phosphatase.